A 188-amino-acid chain; its full sequence is Holliday junction branch migration complex subunit RuvA (188 aa).

A domain I region spans residues 1–64 (MIAGISGRVL…QDGITLYGFS (64 aa)). Residues 65-143 (NEMKKELFLS…SAGIKDMRIY (79 aa)) form a domain II region. A region of interest (flexible linker) is located at residue Tyr143. The segment at 143 to 186 (YHESLEALVSLGYPEKQAREAVKQVYREGMKTSELIKEALKFLS) is domain III.

Belongs to the RuvA family. In terms of assembly, homotetramer. Forms an RuvA(8)-RuvB(12)-Holliday junction (HJ) complex. HJ DNA is sandwiched between 2 RuvA tetramers; dsDNA enters through RuvA and exits via RuvB. An RuvB hexamer assembles on each DNA strand where it exits the tetramer. Each RuvB hexamer is contacted by two RuvA subunits (via domain III) on 2 adjacent RuvB subunits; this complex drives branch migration. In the full resolvosome a probable DNA-RuvA(4)-RuvB(12)-RuvC(2) complex forms which resolves the HJ.

It localises to the cytoplasm. In terms of biological role, the RuvA-RuvB-RuvC complex processes Holliday junction (HJ) DNA during genetic recombination and DNA repair, while the RuvA-RuvB complex plays an important role in the rescue of blocked DNA replication forks via replication fork reversal (RFR). RuvA specifically binds to HJ cruciform DNA, conferring on it an open structure. The RuvB hexamer acts as an ATP-dependent pump, pulling dsDNA into and through the RuvAB complex. HJ branch migration allows RuvC to scan DNA until it finds its consensus sequence, where it cleaves and resolves the cruciform DNA. Promotes Holliday junction (HJ) branch migration in conjunction with RuvB. The chain is Holliday junction branch migration complex subunit RuvA from Thermotoga maritima (strain ATCC 43589 / DSM 3109 / JCM 10099 / NBRC 100826 / MSB8).